We begin with the raw amino-acid sequence, 773 residues long: ATP-dependent RNA helicase MAK5 (773 aa).

Positions Lys-73 to Asp-82 are enriched in basic and acidic residues. Disordered regions lie at residues Lys-73–Leu-99 and Ser-114–Asp-144. Positions Asp-83–Leu-99 are enriched in acidic residues. At Thr-135 the chain carries Phosphothreonine. Ser-138 carries the phosphoserine modification. The Q motif motif lies at Glu-171 to Lys-199. Residues Ile-202–Arg-399 enclose the Helicase ATP-binding domain. ATP is bound at residue Ala-215–Thr-222. The DEAD box motif lies at Asp-333–Asp-336. Residues Asp-452–Asn-615 enclose the Helicase C-terminal domain. The residue at position 678 (Ser-678) is a Phosphoserine.

The protein belongs to the DEAD box helicase family. DDX24/MAK5 subfamily.

Its subcellular location is the nucleus. It is found in the nucleolus. It catalyses the reaction ATP + H2O = ADP + phosphate + H(+). ATP-binding RNA helicase involved in the biogenesis of 60S ribosomal subunits and is required for the normal formation of 25S and 5.8S rRNAs. Required for the maintenance of dsRNA killer plasmid. The chain is ATP-dependent RNA helicase MAK5 (MAK5) from Saccharomyces cerevisiae (strain ATCC 204508 / S288c) (Baker's yeast).